Here is a 509-residue protein sequence, read N- to C-terminus: 2-isopropylmalate synthase (509 aa).

Positions 5 to 267 (IQIFDTTLRD…QTALNLEETK (263 aa)) constitute a Pyruvate carboxyltransferase domain. Mn(2+)-binding residues include Asp-14, His-202, His-204, and Asn-238. Residues 391-509 (KLETLQLQYV…AAENVEKVGN (119 aa)) are regulatory domain.

This sequence belongs to the alpha-IPM synthase/homocitrate synthase family. LeuA type 1 subfamily. As to quaternary structure, homodimer. It depends on Mn(2+) as a cofactor.

The protein resides in the cytoplasm. It catalyses the reaction 3-methyl-2-oxobutanoate + acetyl-CoA + H2O = (2S)-2-isopropylmalate + CoA + H(+). It participates in amino-acid biosynthesis; L-leucine biosynthesis; L-leucine from 3-methyl-2-oxobutanoate: step 1/4. In terms of biological role, catalyzes the condensation of the acetyl group of acetyl-CoA with 3-methyl-2-oxobutanoate (2-ketoisovalerate) to form 3-carboxy-3-hydroxy-4-methylpentanoate (2-isopropylmalate). The chain is 2-isopropylmalate synthase from Staphylococcus aureus (strain bovine RF122 / ET3-1).